A 197-amino-acid polypeptide reads, in one-letter code: Peptide deformylase (197 aa).

Cys-106 and His-148 together coordinate Fe cation. Residue Glu-149 is part of the active site. Fe cation is bound at residue His-152.

The protein belongs to the polypeptide deformylase family. Fe(2+) is required as a cofactor.

It catalyses the reaction N-terminal N-formyl-L-methionyl-[peptide] + H2O = N-terminal L-methionyl-[peptide] + formate. In terms of biological role, removes the formyl group from the N-terminal Met of newly synthesized proteins. Requires at least a dipeptide for an efficient rate of reaction. N-terminal L-methionine is a prerequisite for activity but the enzyme has broad specificity at other positions. In Mycobacterium leprae (strain TN), this protein is Peptide deformylase.